The chain runs to 345 residues: S-adenosylmethionine:tRNA ribosyltransferase-isomerase (345 aa).

It belongs to the QueA family. In terms of assembly, monomer.

It is found in the cytoplasm. It catalyses the reaction 7-aminomethyl-7-carbaguanosine(34) in tRNA + S-adenosyl-L-methionine = epoxyqueuosine(34) in tRNA + adenine + L-methionine + 2 H(+). Its pathway is tRNA modification; tRNA-queuosine biosynthesis. Functionally, transfers and isomerizes the ribose moiety from AdoMet to the 7-aminomethyl group of 7-deazaguanine (preQ1-tRNA) to give epoxyqueuosine (oQ-tRNA). This chain is S-adenosylmethionine:tRNA ribosyltransferase-isomerase, found in Thermus thermophilus (strain ATCC BAA-163 / DSM 7039 / HB27).